A 187-amino-acid chain; its full sequence is Threonylcarbamoyl-AMP synthase (187 aa).

The 184-residue stretch at Thr-4–Leu-187 folds into the YrdC-like domain.

The protein belongs to the SUA5 family. TsaC subfamily.

It is found in the cytoplasm. The catalysed reaction is L-threonine + hydrogencarbonate + ATP = L-threonylcarbamoyladenylate + diphosphate + H2O. Its function is as follows. Required for the formation of a threonylcarbamoyl group on adenosine at position 37 (t(6)A37) in tRNAs that read codons beginning with adenine. Catalyzes the conversion of L-threonine, HCO(3)(-)/CO(2) and ATP to give threonylcarbamoyl-AMP (TC-AMP) as the acyladenylate intermediate, with the release of diphosphate. This Xylella fastidiosa (strain M12) protein is Threonylcarbamoyl-AMP synthase.